The chain runs to 305 residues: MKKAVSVILTLSLFLLTACSLEPPQWAKPSNSGNKKEFTIGLSVSTLNNPFFVSLKKGIEKEAKKRGMKVIIVDAQNDSSKQTSDVEDLIQQGVDALLINPTDSSAISTAVESANAVGVPVVTIDRSAEQGKVETLVASDNVKGGEMAAAFIADKLGKGAKVAELEGVPGASATRERGSGFHNIADQKLQVVTKQSADFDRTKGLTVMENLLQGHPDIQAVFAHNDEMALGALEAINSSGKDILVIGFDGNKDALASIKDRKLSATVAQQPELIGKLATEAADDILHGKKVQKTISAPLKLETQK.

The signal sequence occupies residues 1-18; it reads MKKAVSVILTLSLFLLTA. Cys19 carries the N-palmitoyl cysteine lipid modification. Cys19 carries S-diacylglycerol cysteine lipidation.

It belongs to the bacterial solute-binding protein 2 family. As to quaternary structure, the complex is composed of an ATP-binding protein (RbsA), two transmembrane proteins (RbsC) and a solute-binding protein (RbsB). Interacts with FloT.

Its subcellular location is the cell membrane. The protein localises to the membrane raft. In terms of biological role, part of the ABC transporter complex RbsABC involved in ribose import. Binds ribose. The polypeptide is Ribose import binding protein RbsB (rbsB) (Bacillus subtilis (strain 168)).